The chain runs to 263 residues: HTH-type transcriptional repressor NanR (263 aa).

An HTH gntR-type domain is found at 30-98 (KKLSEMVEEE…NGERARVSRP (69 aa)). Residues 58-77 (ERELMAFFNVGRPSVREALA) constitute a DNA-binding region (H-T-H motif).

This sequence belongs to the NanR family.

Its function is as follows. Transcriptional repressor that controls expression of the genes required for the catabolism of sialic acids. The chain is HTH-type transcriptional repressor NanR from Salmonella arizonae (strain ATCC BAA-731 / CDC346-86 / RSK2980).